Reading from the N-terminus, the 601-residue chain is Elongation factor 4 (601 aa).

One can recognise a tr-type G domain in the interval 7–189; the sequence is SNVRNFSIVA…AIVTRLPPPK (183 aa). GTP is bound by residues 19-24 and 136-139; these read DHGKST and NKVD.

This sequence belongs to the TRAFAC class translation factor GTPase superfamily. Classic translation factor GTPase family. LepA subfamily.

It localises to the cell inner membrane. It catalyses the reaction GTP + H2O = GDP + phosphate + H(+). Required for accurate and efficient protein synthesis under certain stress conditions. May act as a fidelity factor of the translation reaction, by catalyzing a one-codon backward translocation of tRNAs on improperly translocated ribosomes. Back-translocation proceeds from a post-translocation (POST) complex to a pre-translocation (PRE) complex, thus giving elongation factor G a second chance to translocate the tRNAs correctly. Binds to ribosomes in a GTP-dependent manner. The sequence is that of Elongation factor 4 from Afipia carboxidovorans (strain ATCC 49405 / DSM 1227 / KCTC 32145 / OM5) (Oligotropha carboxidovorans).